Here is a 393-residue protein sequence, read N- to C-terminus: Nucleosome assembly protein 1-like 1 (393 aa).

A compositionally biased stretch (basic and acidic residues) spans Met-1–Thr-10. Disordered regions lie at residues Met-1–Ala-36 and Glu-132–Pro-165. Acidic residues-rich tracts occupy residues Glu-11–Glu-30 and Glu-132–Ser-144. An NAP1L motif motif is present at residues Tyr-126 to Ala-151. Residues Gly-145–Pro-165 are compositionally biased toward basic and acidic residues. The Nuclear localization signal signature appears at Ile-274–His-280. A compositionally biased stretch (acidic residues) spans Ala-347 to Asp-378. The tract at residues Ala-347–Gln-393 is disordered. Basic and acidic residues predominate over residues Tyr-379–Gln-393.

Belongs to the nucleosome assembly protein (NAP) family. As to quaternary structure, forms homomultimers. Interacts with histone B4. Interacts with the B-type cyclins ccnb1 and ccnb2. In terms of processing, phosphorylated by cyclin B-cdc2 kinase complexes.

Its subcellular location is the cytoplasm. The protein localises to the nucleus. In terms of biological role, acts as a chaperone for the linker histone to facilitate deposition of histone B4 onto linker DNA. Required for both remodeling of sperm chromatin into nucleosomes, and linker histone binding to nucleosome core dimers. Plays a role in tissue-specific gene regulation. Required for primitive hemopoiesis, acting upstream of tal1/scl. The chain is Nucleosome assembly protein 1-like 1 from Xenopus tropicalis (Western clawed frog).